The chain runs to 183 residues: ATP-dependent protease subunit HslV (183 aa).

Residue Thr-2 is part of the active site. Residues Gly-157, Cys-160, and Thr-163 each contribute to the Na(+) site.

It belongs to the peptidase T1B family. HslV subfamily. In terms of assembly, a double ring-shaped homohexamer of HslV is capped on each side by a ring-shaped HslU homohexamer. The assembly of the HslU/HslV complex is dependent on binding of ATP.

Its subcellular location is the cytoplasm. It carries out the reaction ATP-dependent cleavage of peptide bonds with broad specificity.. Its activity is regulated as follows. Allosterically activated by HslU binding. In terms of biological role, protease subunit of a proteasome-like degradation complex believed to be a general protein degrading machinery. This Vibrio campbellii (strain ATCC BAA-1116) protein is ATP-dependent protease subunit HslV.